The sequence spans 275 residues: 4-deoxy-L-threo-5-hexosulose-uronate ketol-isomerase (275 aa).

Zn(2+)-binding residues include His193, His195, Glu200, and His242.

This sequence belongs to the KduI family. It depends on Zn(2+) as a cofactor.

It catalyses the reaction 5-dehydro-4-deoxy-D-glucuronate = 3-deoxy-D-glycero-2,5-hexodiulosonate. It functions in the pathway glycan metabolism; pectin degradation; 2-dehydro-3-deoxy-D-gluconate from pectin: step 4/5. In terms of biological role, catalyzes the isomerization of 5-dehydro-4-deoxy-D-glucuronate to 3-deoxy-D-glycero-2,5-hexodiulosonate. This is 4-deoxy-L-threo-5-hexosulose-uronate ketol-isomerase from Bacillus licheniformis (strain ATCC 14580 / DSM 13 / JCM 2505 / CCUG 7422 / NBRC 12200 / NCIMB 9375 / NCTC 10341 / NRRL NRS-1264 / Gibson 46).